A 908-amino-acid polypeptide reads, in one-letter code: Translation initiation factor IF-2 (908 aa).

Disordered regions lie at residues 52–229 (QSHG…AEEA) and 241–316 (AGQY…SAQH). Positions 65 to 84 (KSKTTSTARVTGSSGKSKSV) are enriched in polar residues. Basic and acidic residues-rich tracts occupy residues 94 to 108 (FEKP…ELAA), 120 to 138 (AAKD…EERQ), 176 to 185 (IEVKPKEQPK), 193 to 229 (PKVE…AEEA), 270 to 280 (SFEKERREIKR), and 294 to 303 (KNQDEREIKN). The 170-residue stretch at 409-578 (TRPPVVTIMG…SLQAELMELE (170 aa)) folds into the tr-type G domain. A G1 region spans residues 418 to 425 (GHVDHGKT). GTP is bound at residue 418–425 (GHVDHGKT). Residues 443–447 (GITQH) form a G2 region. Positions 464–467 (DTPG) are G3. GTP-binding positions include 464–468 (DTPGH) and 518–521 (NKMD). The G4 stretch occupies residues 518–521 (NKMD). A G5 region spans residues 554–556 (SAK).

It belongs to the TRAFAC class translation factor GTPase superfamily. Classic translation factor GTPase family. IF-2 subfamily.

It localises to the cytoplasm. Its function is as follows. One of the essential components for the initiation of protein synthesis. Protects formylmethionyl-tRNA from spontaneous hydrolysis and promotes its binding to the 30S ribosomal subunits. Also involved in the hydrolysis of GTP during the formation of the 70S ribosomal complex. This chain is Translation initiation factor IF-2, found in Psychrobacter arcticus (strain DSM 17307 / VKM B-2377 / 273-4).